The primary structure comprises 386 residues: S-adenosylmethionine synthase (386 aa).

Position 16 (His-16) interacts with ATP. Asp-18 contacts Mg(2+). Glu-44 lines the K(+) pocket. L-methionine-binding residues include Glu-57 and Gln-100. The tract at residues 100 to 110 is flexible loop; the sequence is QSPDINQGVDR. ATP is bound by residues 164 to 166, 230 to 231, Asp-239, 245 to 246, Ala-262, and Lys-266; these read DGK, KF, and RK. An L-methionine-binding site is contributed by Asp-239. Residue Lys-270 participates in L-methionine binding.

The protein belongs to the AdoMet synthase family. As to quaternary structure, homotetramer; dimer of dimers. Requires Mg(2+) as cofactor. K(+) serves as cofactor.

The protein resides in the cytoplasm. It catalyses the reaction L-methionine + ATP + H2O = S-adenosyl-L-methionine + phosphate + diphosphate. It participates in amino-acid biosynthesis; S-adenosyl-L-methionine biosynthesis; S-adenosyl-L-methionine from L-methionine: step 1/1. Functionally, catalyzes the formation of S-adenosylmethionine (AdoMet) from methionine and ATP. The overall synthetic reaction is composed of two sequential steps, AdoMet formation and the subsequent tripolyphosphate hydrolysis which occurs prior to release of AdoMet from the enzyme. This chain is S-adenosylmethionine synthase, found in Wolinella succinogenes (strain ATCC 29543 / DSM 1740 / CCUG 13145 / JCM 31913 / LMG 7466 / NCTC 11488 / FDC 602W) (Vibrio succinogenes).